The sequence spans 547 residues: MAAKDVKFGNDARVKMLKGVNVLADAVKVTLGPKGRNVVLDKAYGAPTITKDGVSVAREIELEDKFENMGAQMVKEVASKANDAAGDGTTTATVLAQAIVNEGLKAVAAGMNPMDLKRGIDKAVVAVVEELKAISKPCETSKEIEQVGTISANSDETVGKLIAQAMEKVGKEGVITVEDGTGLDDALDVVEGMQFDRGYLSPYFINKPEAGTVELENPYIILVDKKISNIREILPVLEAVAKAGKPLLIVAEDIEGEALATLVVNTMRGIVKVAAVKAPGFGDRRKAMLQDIAILTAGTVISEEIGMELEKATLEELGQAKRVVITKDNTTIIDGIGDEAQIKARVAQIRQQIEDSTSDYDKEKLQERVAKLAGGVAVIKVGAATEVAMKEKKDRVDDALHATRAAVEEGIVPGGGVALVRAASKVATTLTGDNEEQNVGIKLALRAMEAPLRQIVTNAGEEASVVARNVKDGNGNYGYNAGTEQYGDMLEMGILDPPKVTRSALQFAASIAGLMITTECMITDLPKEEKLDPAAAMGGMGGMGGMM.

ATP-binding positions include 30 to 33 (TLGP), Lys-51, 87 to 91 (DGTTT), Gly-415, and Asp-496.

It belongs to the chaperonin (HSP60) family. As to quaternary structure, forms a cylinder of 14 subunits composed of two heptameric rings stacked back-to-back. Interacts with the co-chaperonin GroES.

The protein resides in the cytoplasm. It carries out the reaction ATP + H2O + a folded polypeptide = ADP + phosphate + an unfolded polypeptide.. In terms of biological role, together with its co-chaperonin GroES, plays an essential role in assisting protein folding. The GroEL-GroES system forms a nano-cage that allows encapsulation of the non-native substrate proteins and provides a physical environment optimized to promote and accelerate protein folding. In Actinobacillus pleuropneumoniae (Haemophilus pleuropneumoniae), this protein is Chaperonin GroEL.